We begin with the raw amino-acid sequence, 231 residues long: Chromosome partition protein MukE (231 aa).

The tract at residues 211 to 231 (SLLADEEEQDYNEQAELEGEA) is disordered. Residues 214–231 (ADEEEQDYNEQAELEGEA) show a composition bias toward acidic residues.

It belongs to the MukE family. In terms of assembly, interacts, and probably forms a ternary complex, with MukF and MukB. The complex formation is stimulated by calcium or magnesium.

It localises to the cytoplasm. Its subcellular location is the nucleoid. In terms of biological role, involved in chromosome condensation, segregation and cell cycle progression. May participate in facilitating chromosome segregation by condensation DNA from both sides of a centrally located replisome during cell division. Probably acts via its interaction with MukB and MukF. The sequence is that of Chromosome partition protein MukE from Vibrio vulnificus (strain CMCP6).